A 554-amino-acid chain; its full sequence is Glutamine--tRNA ligase (554 aa).

Positions 34–44 match the 'HIGH' region motif; the sequence is PEPNGYLHIGH. ATP-binding positions include 35–37 and 41–47; these read EPN and HIGHAKS. 2 residues coordinate L-glutamine: Asp-67 and Tyr-212. Residues Thr-231, 261–262, and 269–271 contribute to the ATP site; these read RL and MSK. Positions 268–272 match the 'KMSKS' region motif; the sequence is VMSKR. Residues 317 to 324 form an interaction with tRNA region; it reads TKQDNTIE.

It belongs to the class-I aminoacyl-tRNA synthetase family. Monomer.

Its subcellular location is the cytoplasm. The enzyme catalyses tRNA(Gln) + L-glutamine + ATP = L-glutaminyl-tRNA(Gln) + AMP + diphosphate. The sequence is that of Glutamine--tRNA ligase from Shigella dysenteriae serotype 1 (strain Sd197).